Here is a 458-residue protein sequence, read N- to C-terminus: Photosystem II CP43 reaction center protein (458 aa).

Transmembrane regions (helical) follow at residues 54 to 78 (LFEV…PHLA), 119 to 140 (LRGP…KDKN), 163 to 185 (KAMF…RVIT), 240 to 260 (RPFN…LSYS), and 276 to 297 (WFNN…ASQA). Glu-352 lines the [CaMn4O5] cluster pocket. The chain crosses the membrane as a helical span at residues 432–456 (RARAAAAGFEKGIDRKTEPVLSMSD).

This sequence belongs to the PsbB/PsbC family. PsbC subfamily. As to quaternary structure, PSII is composed of 1 copy each of membrane proteins PsbA, PsbB, PsbC, PsbD, PsbE, PsbF, PsbH, PsbI, PsbJ, PsbK, PsbL, PsbM, PsbT, PsbX, PsbY, PsbZ, Psb30/Ycf12, peripheral proteins PsbO, CyanoQ (PsbQ), PsbU, PsbV and a large number of cofactors. It forms dimeric complexes. The cofactor is Binds multiple chlorophylls and provides some of the ligands for the Ca-4Mn-5O cluster of the oxygen-evolving complex. It may also provide a ligand for a Cl- that is required for oxygen evolution. PSII binds additional chlorophylls, carotenoids and specific lipids..

The protein localises to the cellular thylakoid membrane. Its function is as follows. One of the components of the core complex of photosystem II (PSII). It binds chlorophyll and helps catalyze the primary light-induced photochemical processes of PSII. PSII is a light-driven water:plastoquinone oxidoreductase, using light energy to abstract electrons from H(2)O, generating O(2) and a proton gradient subsequently used for ATP formation. This chain is Photosystem II CP43 reaction center protein, found in Prochlorothrix hollandica.